A 240-amino-acid chain; its full sequence is Protein OPG176 (240 aa).

The protein belongs to the orthopoxvirus OPG176 family. Tetramer. Interacts with host MYD88, TRF4, TICAM2 and MAL.

BCL2-like protein which disrupts the host immune response by inhibiting the TLR4 signaling pathway leading to NF-kappa-B activation. Acts close to the plasma membrane and targets several host TIR-domain containing adapter proteins including MYD88, TIRAP, TRIF and TICAM2. In turn, blocks the host NF-kappa-B and TRIF-mediated IRF3 activation. The sequence is that of Protein OPG176 (OPG176) from Bos taurus (Bovine).